The primary structure comprises 60 residues: UPF0434 protein YcaR (60 aa).

This sequence belongs to the UPF0434 family.

This chain is UPF0434 protein YcaR, found in Escherichia fergusonii (strain ATCC 35469 / DSM 13698 / CCUG 18766 / IAM 14443 / JCM 21226 / LMG 7866 / NBRC 102419 / NCTC 12128 / CDC 0568-73).